A 290-amino-acid chain; its full sequence is Acetyl-coenzyme A carboxylase carboxyl transferase subunit beta (290 aa).

A CoA carboxyltransferase N-terminal domain is found at 27–290 (LWVKCPSCEA…LQRQPADALA (264 aa)). Zn(2+) contacts are provided by C31, C34, C50, and C53. A C4-type zinc finger spans residues 31–53 (CPSCEAVLYRNDVDANLHVCPKC).

Belongs to the AccD/PCCB family. Acetyl-CoA carboxylase is a heterohexamer composed of biotin carboxyl carrier protein (AccB), biotin carboxylase (AccC) and two subunits each of ACCase subunit alpha (AccA) and ACCase subunit beta (AccD). Zn(2+) serves as cofactor.

The protein localises to the cytoplasm. The catalysed reaction is N(6)-carboxybiotinyl-L-lysyl-[protein] + acetyl-CoA = N(6)-biotinyl-L-lysyl-[protein] + malonyl-CoA. It functions in the pathway lipid metabolism; malonyl-CoA biosynthesis; malonyl-CoA from acetyl-CoA: step 1/1. Functionally, component of the acetyl coenzyme A carboxylase (ACC) complex. Biotin carboxylase (BC) catalyzes the carboxylation of biotin on its carrier protein (BCCP) and then the CO(2) group is transferred by the transcarboxylase to acetyl-CoA to form malonyl-CoA. The sequence is that of Acetyl-coenzyme A carboxylase carboxyl transferase subunit beta from Burkholderia multivorans (strain ATCC 17616 / 249).